The chain runs to 333 residues: T-cell surface glycoprotein CD1b (333 aa).

The first 17 residues, 1–17 (MLLLPFQLLAVLFPGGN), serve as a signal peptide directing secretion. Residues 18 to 303 (SEHAFQGPTS…YWRNPTSIGS (286 aa)) are Extracellular-facing. Residues Asn38, Asn75, and Asn146 are each glycosylated (N-linked (GlcNAc...) asparagine). 3 cysteine pairs are disulfide-bonded: Cys120–Cys184, Cys149–Cys163, and Cys224–Cys279. The 111-residue stretch at 185-295 (PRYLLGVLNA…LEGQDIILYW (111 aa)) folds into the Ig-like domain. N-linked (GlcNAc...) asparagine glycosylation is present at Asn258. A helical transmembrane segment spans residues 304–324 (IVLAIIVPSLLLLLCLALWYM). Over 325–333 (RRRSYQNIP) the chain is Cytoplasmic. Residues 329 to 332 (YQNI) carry the Internalization signal motif.

As to quaternary structure, heterodimer with B2M (beta-2-microglobulin). Interacts with saposin C. Expressed on cortical thymocytes, on certain T-cell leukemias, and in various other tissues.

It localises to the cell membrane. The protein resides in the endosome membrane. The protein localises to the lysosome membrane. Antigen-presenting protein that binds self and non-self lipid and glycolipid antigens and presents them to T-cell receptors on natural killer T-cells. This is T-cell surface glycoprotein CD1b (CD1B) from Homo sapiens (Human).